A 466-amino-acid polypeptide reads, in one-letter code: Tubulointerstitial nephritis antigen-like (466 aa).

The signal sequence occupies residues 1-21; the sequence is MWGCWLGLLLLLLAGQAALEA. One can recognise an SMB domain in the interval 49 to 96; the sequence is EQDMCCRGRADECALPYLGATCYCDLFCNRTVSDCCPDFWDFCLGIPP. 5 cysteine pairs are disulfide-bonded: Cys-53–Cys-72, Cys-70–Cys-72, Cys-70–Cys-84, Cys-76–Cys-83, and Cys-84–Cys-91. N-linked (GlcNAc...) asparagine glycosylation is present at Asn-77. Asn-160 carries an N-linked (GlcNAc...) asparagine glycan.

The protein belongs to the peptidase C1 family. Glycosylated. In terms of tissue distribution, highly expressed in kidney, heart and adrenocortical cells of adrenal glands. Moderately expressed in spleen and liver. Also found in prostate, seminal vesicle, epididymis and testis in male reproductive organs. In adrenal glands is found in the outer cortical regions corresponding to the zona glomerulosa (zG) and the undifferentiated cell zone (zU) (at protein level).

Its subcellular location is the secreted. In terms of biological role, may be implicated in the adrenocortical zonation and in mechanisms for repressing the CYP11B1 gene expression in adrenocortical cells. This is a non catalytic peptidase C1 family protein. In Mus musculus (Mouse), this protein is Tubulointerstitial nephritis antigen-like (Tinagl1).